The following is a 102-amino-acid chain: Small ribosomal subunit protein uS10 (102 aa).

The protein belongs to the universal ribosomal protein uS10 family. Part of the 30S ribosomal subunit.

Involved in the binding of tRNA to the ribosomes. The sequence is that of Small ribosomal subunit protein uS10 from Levilactobacillus brevis (strain ATCC 367 / BCRC 12310 / CIP 105137 / JCM 1170 / LMG 11437 / NCIMB 947 / NCTC 947) (Lactobacillus brevis).